The primary structure comprises 80 residues: Acyl carrier protein (80 aa).

The region spanning 4–79 is the Carrier domain; it reads EAILEKVRSI…DAVKYIEDKQ (76 aa). Ser39 is modified (O-(pantetheine 4'-phosphoryl)serine).

The protein belongs to the acyl carrier protein (ACP) family. 4'-phosphopantetheine is transferred from CoA to a specific serine of apo-ACP by AcpS. This modification is essential for activity because fatty acids are bound in thioester linkage to the sulfhydryl of the prosthetic group.

The protein resides in the cytoplasm. Its pathway is lipid metabolism; fatty acid biosynthesis. In terms of biological role, carrier of the growing fatty acid chain in fatty acid biosynthesis. This chain is Acyl carrier protein, found in Prochlorococcus marinus (strain SARG / CCMP1375 / SS120).